The primary structure comprises 373 residues: Mannan endo-1,4-beta-mannosidase A (373 aa).

The N-terminal stretch at 1–17 (MKGLFAFGLGLLSLVNA) is a signal peptide. Substrate is bound by residues W81, N193, and 194–196 (EPR). Residue E194 is the Proton donor/acceptor of the active site. C197 and C200 are disulfide-bonded. E230, Y267, and W271 together coordinate substrate. Residues C289 and C296 are joined by a disulfide bond. E300 acts as the Nucleophile in catalysis. C308 and C359 are joined by a disulfide. Position 332 (W332) interacts with substrate.

Belongs to the glycosyl hydrolase 5 (cellulase A) family. In terms of assembly, monomer. In terms of processing, not glycosylated.

It localises to the secreted. It catalyses the reaction Random hydrolysis of (1-&gt;4)-beta-D-mannosidic linkages in mannans, galactomannans and glucomannans.. Endo-1,4-mannanase that catalyzes the random hydrolysis of (1-&gt;4)-beta-D-mannosidic linkages in mannans and heteromannans. It is a crucial enzyme for depolymerization of seed galactomannans and wood galactoglucomannans. Hydrolyzes structurally different mannan polysaccharides, such as galactomannans, glucomannans, and beta-1,4-mannans from different sources, yielding principally mannobiose. Also has transglycosylation activity. This is Mannan endo-1,4-beta-mannosidase A from Podospora anserina (strain S / ATCC MYA-4624 / DSM 980 / FGSC 10383) (Pleurage anserina).